A 206-amino-acid chain; its full sequence is Small ribosomal subunit protein uS4 (206 aa).

One can recognise an S4 RNA-binding domain in the interval G96–A157.

The protein belongs to the universal ribosomal protein uS4 family. Part of the 30S ribosomal subunit. Contacts protein S5. The interaction surface between S4 and S5 is involved in control of translational fidelity.

In terms of biological role, one of the primary rRNA binding proteins, it binds directly to 16S rRNA where it nucleates assembly of the body of the 30S subunit. With S5 and S12 plays an important role in translational accuracy. This is Small ribosomal subunit protein uS4 from Sodalis glossinidius (strain morsitans).